The primary structure comprises 126 residues: Small ribosomal subunit protein uS11 (126 aa).

This sequence belongs to the universal ribosomal protein uS11 family. In terms of assembly, part of the 30S ribosomal subunit. Interacts with proteins S7 and S18. Binds to IF-3.

Functionally, located on the platform of the 30S subunit, it bridges several disparate RNA helices of the 16S rRNA. Forms part of the Shine-Dalgarno cleft in the 70S ribosome. The protein is Small ribosomal subunit protein uS11 of Treponema pallidum (strain Nichols).